Consider the following 402-residue polypeptide: UDP-N-acetylmuramoylalanine--D-glutamate ligase (402 aa).

97 to 103 (GTNGKTT) contacts ATP.

The protein belongs to the MurCDEF family.

It localises to the cytoplasm. It carries out the reaction UDP-N-acetyl-alpha-D-muramoyl-L-alanine + D-glutamate + ATP = UDP-N-acetyl-alpha-D-muramoyl-L-alanyl-D-glutamate + ADP + phosphate + H(+). It functions in the pathway cell wall biogenesis; peptidoglycan biosynthesis. Functionally, cell wall formation. Catalyzes the addition of glutamate to the nucleotide precursor UDP-N-acetylmuramoyl-L-alanine (UMA). This Campylobacter jejuni subsp. jejuni serotype O:23/36 (strain 81-176) protein is UDP-N-acetylmuramoylalanine--D-glutamate ligase.